A 356-amino-acid polypeptide reads, in one-letter code: Peptide chain release factor 1 (356 aa).

Position 232 is an N5-methylglutamine (Q232). The segment at 281–301 (ERQSSELSADRKAQVGSGDRS) is disordered.

Belongs to the prokaryotic/mitochondrial release factor family. Methylated by PrmC. Methylation increases the termination efficiency of RF1.

It localises to the cytoplasm. Its function is as follows. Peptide chain release factor 1 directs the termination of translation in response to the peptide chain termination codons UAG and UAA. The protein is Peptide chain release factor 1 of Desulfovibrio desulfuricans (strain ATCC 27774 / DSM 6949 / MB).